The following is a 416-amino-acid chain: UDP-N-acetylmuramoylalanine--D-glutamate ligase (416 aa).

An ATP-binding site is contributed by 108-114; the sequence is GTTGKTT.

Belongs to the MurCDEF family.

It localises to the cytoplasm. It catalyses the reaction UDP-N-acetyl-alpha-D-muramoyl-L-alanine + D-glutamate + ATP = UDP-N-acetyl-alpha-D-muramoyl-L-alanyl-D-glutamate + ADP + phosphate + H(+). It participates in cell wall biogenesis; peptidoglycan biosynthesis. Cell wall formation. Catalyzes the addition of glutamate to the nucleotide precursor UDP-N-acetylmuramoyl-L-alanine (UMA). This Chlamydia trachomatis serovar L2 (strain ATCC VR-902B / DSM 19102 / 434/Bu) protein is UDP-N-acetylmuramoylalanine--D-glutamate ligase.